A 183-amino-acid polypeptide reads, in one-letter code: Dual-action ribosomal maturation protein DarP (183 aa).

The protein belongs to the DarP family.

The protein resides in the cytoplasm. Its function is as follows. Member of a network of 50S ribosomal subunit biogenesis factors which assembles along the 30S-50S interface, preventing incorrect 23S rRNA structures from forming. Promotes peptidyl transferase center (PTC) maturation. The sequence is that of Dual-action ribosomal maturation protein DarP from Shigella flexneri.